The chain runs to 154 residues: 17 kDa surface antigen (154 aa).

The first 19 residues, 1–19, serve as a signal peptide directing secretion; that stretch reads MKLLSKIMIIALAASTLQA. Cys20 carries N-palmitoyl cysteine lipidation. Cys20 is lipidated: S-diacylglycerol cysteine.

Belongs to the rickettsiale 17 kDa surface antigen family.

The protein resides in the cell outer membrane. The protein is 17 kDa surface antigen (omp) of Rickettsia amblyommatis (Rickettsia amblyommii).